The sequence spans 347 residues: MSWDLSTAKPPVVVDTTLRDGSHAHRHQYTVEEARAIAQALDEAGVYAIEVSHGDGLGGSSLQYGFSRTDEMELIRAVRETVRRAKVAALLLPGIGTRKELKEAVEAGIQMVRIATQCTEADISEQHFGMAKEMGLEAVGFLMMSHMRPPEFLAEQARLMEGYGADVVYIVDSAGAMLPEDAYARVKALKEALSRAKVGFHAHNNLGLAIGNTLAALAAGADWVDATLRGYGAGAGNAPLEVLAAVLDKAGLNPGLDVFKLLDAAEYVMGPILHFQPYPDRDSVAIGYAGVYSTFLLHAKRIGKELGVDPLAILLELGRRQAVAGQEDWILRVALELKEKEAGALAD.

Residues Pro11–Leu262 enclose the Pyruvate carboxyltransferase domain. Substrate is bound at residue Arg19–Asp20. Mn(2+) is bound at residue Asp20. His23 serves as the catalytic Proton acceptor. Substrate-binding residues include Ser173 and His201. 2 residues coordinate Mn(2+): His201 and His203. Residue Tyr292 coordinates substrate.

The protein belongs to the 4-hydroxy-2-oxovalerate aldolase family. As to quaternary structure, homodimer. Can also form a heterotetramer composed of two aldolase (TTHB246) and two dehydrogenase (TTHB247) subunits. Upon complex formation, the aldolase shows a 5-fold increase in substrate affinity, while the dehydrogenase shows a 3-fold decrease; the kcat values of each enzyme are reduced by 2-fold when they are in a complex. Co(2+) serves as cofactor. Requires Ni(2+) as cofactor. It depends on Mn(2+) as a cofactor.

It catalyses the reaction (S)-4-hydroxy-2-oxopentanoate = acetaldehyde + pyruvate. The enzyme catalyses (S)-4-hydroxy-2-oxohexanoate = propanal + pyruvate. Its activity is regulated as follows. Appears to be allosterically activated by NADH. In terms of biological role, catalyzes the retro-aldol cleavage of both 4-hydroxy-2-oxopentanoate (HOPA) and 4-hydroxy-2-oxohexanoate (HOHA) to pyruvate and acetaldehyde or propanaldehyde, respectively. The aldehydes produced by this reaction are directly channeled to the dehydrogenase TTHB247, ensuring that these toxic aldehydes are sequestered from cellular components. Is involved in the meta-cleavage pathway for the degradation of aromatic compounds. Appears to be stereospecific since it can cleave (4S)-4-hydroxy-2-oxopentanoate but not the (4R) isomer. Is not able to catalyze the aldol addition of 2-oxobutyrate with acetaldehyde; this indicates that the enzyme is specific for pyruvate as the carbonyl donor. The protein is 4-hydroxy-2-oxovalerate aldolase of Thermus thermophilus (strain ATCC 27634 / DSM 579 / HB8).